The chain runs to 484 residues: MKFIIKLFPEIMIKSDSVRKRFIKILTGNIRNILDKHDDSVAVVRHWDFIEVRSKHEENRPHLIELLQCIPGIHHFLEVEERPFTDLHNIFEQTLERMRDELVDKTFCVRAKRRGKHSFSSLEIERYVGGGLNQHIETAKVKLKNPDVTVRIEVDNDKLLFIQARHEGIGGYPIGTQEDVLSLISGGFDSGVSSYMLIRRGSRVHYCFFNLGGAAHEIGVKQMVYHLWNRYGSSHKVRFIAINFEAVVGEILEKIDNGQMGVVLKRMMVRAAGKVAQRFAIEAIVTGEALGQVSSQTLTNLRLIDEAAGTLVLRPLITHDKEQIIAMAKQIGTEDIAKSMPEFCGVISKNPTVKAVRERILAEEEHFDFDILESAVQNAEYLDIRQIAEETAKGVVEIDGVSVLGENDVILDIRSPEETDENPLALENRQVIELPFYKVSSQFGELDQSKNYVLYCERGVMSKLQALYLKENGFNNVQVFVKAK.

Residues 61–166 (PHLIELLQCI…DKLLFIQARH (106 aa)) enclose the THUMP domain. ATP-binding positions include 183-184 (LI), lysine 265, glycine 287, and glutamine 296. Residues cysteine 344 and cysteine 456 are joined by a disulfide bond. The 80-residue stretch at 404–483 (LGENDVILDI…FNNVQVFVKA (80 aa)) folds into the Rhodanese domain. The Cysteine persulfide intermediate role is filled by cysteine 456.

The protein belongs to the ThiI family.

Its subcellular location is the cytoplasm. It catalyses the reaction [ThiI sulfur-carrier protein]-S-sulfanyl-L-cysteine + a uridine in tRNA + 2 reduced [2Fe-2S]-[ferredoxin] + ATP + H(+) = [ThiI sulfur-carrier protein]-L-cysteine + a 4-thiouridine in tRNA + 2 oxidized [2Fe-2S]-[ferredoxin] + AMP + diphosphate. It carries out the reaction [ThiS sulfur-carrier protein]-C-terminal Gly-Gly-AMP + S-sulfanyl-L-cysteinyl-[cysteine desulfurase] + AH2 = [ThiS sulfur-carrier protein]-C-terminal-Gly-aminoethanethioate + L-cysteinyl-[cysteine desulfurase] + A + AMP + 2 H(+). Its pathway is cofactor biosynthesis; thiamine diphosphate biosynthesis. Functionally, catalyzes the ATP-dependent transfer of a sulfur to tRNA to produce 4-thiouridine in position 8 of tRNAs, which functions as a near-UV photosensor. Also catalyzes the transfer of sulfur to the sulfur carrier protein ThiS, forming ThiS-thiocarboxylate. This is a step in the synthesis of thiazole, in the thiamine biosynthesis pathway. The sulfur is donated as persulfide by IscS. The chain is tRNA sulfurtransferase from Actinobacillus succinogenes (strain ATCC 55618 / DSM 22257 / CCUG 43843 / 130Z).